The chain runs to 237 residues: Ribitol-5-phosphate cytidylyltransferase (237 aa).

Residues 7–10 (LAGG) and 80–86 (GEDRNET) contribute to the CTP site.

It belongs to the IspD/TarI cytidylyltransferase family. TarI subfamily.

The enzyme catalyses D-ribitol 5-phosphate + CTP + H(+) = CDP-L-ribitol + diphosphate. The protein operates within cell wall biogenesis; poly(ribitol phosphate) teichoic acid biosynthesis. Catalyzes the transfer of the cytidylyl group of CTP to D-ribitol 5-phosphate. This is Ribitol-5-phosphate cytidylyltransferase from Listeria innocua serovar 6a (strain ATCC BAA-680 / CLIP 11262).